The sequence spans 976 residues: Dibasic-processing endoprotease (976 aa).

Positions 1-17 (MLRKFILGLLLASQAVA) are cleaved as a signal peptide. Residue asparagine 156 is glycosylated (N-linked (GlcNAc...) asparagine). Positions 172-212 (AEEAQKAQDDKGDKKEDQKDDKKEGQEAQKEGDKEDNKGDD) are enriched in basic and acidic residues. The segment at 172 to 246 (AEEAQKAQDD…VQWKPVDESM (75 aa)) is disordered. Residues 213-231 (KEDGEEDDDDDEDEDDDDA) show a composition bias toward acidic residues. In terms of domain architecture, Peptidase S8 spans 277 to 595 (QWYLHNVHKA…YGKLDASKIV (319 aa)). Asparagine 291 and asparagine 299 each carry an N-linked (GlcNAc...) asparagine glycan. Aspartate 311 (charge relay system) is an active-site residue. N-linked (GlcNAc...) asparagine glycosylation is present at asparagine 336. Residues histidine 349 and serine 528 each act as charge relay system in the active site. Residues 524 to 544 (HGGTSAAAPLAAGVFALALSV) form a helical membrane-spanning segment. Residues 604-737 (VNNQTSFHSE…QLNVFGEQKD (134 aa)) enclose the P/Homo B domain. Asparagine 606 is a glycosylation site (N-linked (GlcNAc...) asparagine). The disordered stretch occupies residues 733–848 (GEQKDKREEN…SDSHTSWWPD (116 aa)). The span at 734–830 (EQKDKREENK…EEKPEEKPVD (97 aa)) shows a compositional bias: basic and acidic residues. A helical transmembrane segment spans residues 855–875 (AWLYGAVLLVGGFIAVIGIYA). An N-linked (GlcNAc...) asparagine glycan is attached at asparagine 886. A disordered region spans residues 914 to 976 (PEDTHRRSGD…RDNDRQNLLG (63 aa)). Basic and acidic residues-rich tracts occupy residues 915-928 (EDTH…DRLY) and 940-976 (MFRI…NLLG).

Belongs to the peptidase S8 family. Furin subfamily.

The protein resides in the membrane. This is Dibasic-processing endoprotease (XPR6) from Yarrowia lipolytica (strain CLIB 122 / E 150) (Yeast).